Consider the following 115-residue polypeptide: Glutaredoxin-like protein C5orf63 homolog (115 aa).

Cys-40 and Cys-43 are disulfide-bonded.

This sequence belongs to the glutaredoxin family. YDR286C subfamily.

The sequence is that of Glutaredoxin-like protein C5orf63 homolog from Mus musculus (Mouse).